We begin with the raw amino-acid sequence, 532 residues long: MTHGRVNPDFRLEDQGITGLGTVYYNLIEPDLIQYALARGEGSLGKGGSFLVTTGKFTGRSPKDKHVVKTDSVADTIWWENNREMSPEGFDQLYTDMLAHMEGRDYFVEDLTGGSDPKHAINVRMVTELAWHGLFIRHMLRRPDREDLDDFIADFTVINCPSFQADPAKHNCRSETVIAMNFDKKLILIGGTEYAGENKKSVFTLLNYLLPEKGVMPMHCSANHAVGNPVDTAVFFGLSGTGKTTLSADPARTLIGDDEHGWSDTGTFNFEGGCYAKTISLNPEAEPEIYATTEKFGTVIENMVYDAETKDLDFEDDSLTANMRCAYPLHYISNASQAARGGHPKNIIMLTCDAFGVLPPISRLTPAQAMYHFLSGFTSKVAGTERGVTEPEPTFSTCFGAPFMPRRPEVYGNLLREKIATHGATCWLVNTGWTGGAYGTGSRMPIKATRGLLTAALDGSLADAEFRKDPNFGFQVPVDVTGVPGILLDPRRTWDDAEAYDRQAAKLVKMFSDNFEQYLPFIDEDVRAAAIS.

Arg-60, Tyr-194, and Lys-200 together coordinate substrate. Residues Lys-200, His-219, and 237–245 each bind ATP; that span reads GLSGTGKTT. Lys-200 and His-219 together coordinate Mn(2+). Asp-258 is a Mn(2+) binding site. ATP contacts are provided by Glu-286, Arg-324, and Thr-449. Arg-324 is a binding site for substrate.

It belongs to the phosphoenolpyruvate carboxykinase (ATP) family. Mn(2+) is required as a cofactor.

The protein resides in the cytoplasm. It carries out the reaction oxaloacetate + ATP = phosphoenolpyruvate + ADP + CO2. It functions in the pathway carbohydrate biosynthesis; gluconeogenesis. Functionally, involved in the gluconeogenesis. Catalyzes the conversion of oxaloacetate (OAA) to phosphoenolpyruvate (PEP) through direct phosphoryl transfer between the nucleoside triphosphate and OAA. This chain is Phosphoenolpyruvate carboxykinase (ATP), found in Roseobacter denitrificans (strain ATCC 33942 / OCh 114) (Erythrobacter sp. (strain OCh 114)).